Consider the following 357-residue polypeptide: Mitogen-activated protein kinase kinase SIPKK (357 aa).

Residues 70 to 330 (FEAVKVIGKG…ANELMRHPFI (261 aa)) enclose the Protein kinase domain. ATP contacts are provided by residues 76 to 84 (IGKGNGGIV) and Lys99. The active-site Proton acceptor is the Asp192.

It belongs to the protein kinase superfamily. STE Ser/Thr protein kinase family. MAP kinase kinase subfamily. In terms of assembly, interacts with SIPK.

It catalyses the reaction L-tyrosyl-[protein] + ATP = O-phospho-L-tyrosyl-[protein] + ADP + H(+). The enzyme catalyses L-seryl-[protein] + ATP = O-phospho-L-seryl-[protein] + ADP + H(+). It carries out the reaction L-threonyl-[protein] + ATP = O-phospho-L-threonyl-[protein] + ADP + H(+). Functionally, phosphorylates myelin basic protein (MBP) in vitro. May be involved in disease resistance. This chain is Mitogen-activated protein kinase kinase SIPKK, found in Nicotiana tabacum (Common tobacco).